Consider the following 160-residue polypeptide: H/ACA ribonucleoprotein complex subunit 2 (160 aa).

Serine 15 carries the post-translational modification Phosphoserine. Residue threonine 23 is modified to Phosphothreonine.

It belongs to the eukaryotic ribosomal protein eL8 family. Component of the box H/ACA small nucleolar ribonucleoprotein (H/ACA snoRNP) complex consisting of Nop60B, Gar1, NPH2 and Nop10, and associated with H/ACA-type snoRNAs.

It is found in the nucleus. The protein localises to the nucleolus. Functionally, component of the box H/ACA small nucleolar ribonucleoprotein (H/ACA snoRNP) complex, which catalyzes pseudouridylation of rRNA. This involves the isomerization of uridine such that the ribose is subsequently attached to C5, instead of the normal N1. Pseudouridine ('psi') residues may serve to stabilize the conformation of rRNAs. Required for ribosome biogenesis. H/ACA snoRNP complex-dependent ribosome biogenesis is important in female germline cell differentiation during oogenesis. The sequence is that of H/ACA ribonucleoprotein complex subunit 2 from Drosophila melanogaster (Fruit fly).